Reading from the N-terminus, the 582-residue chain is TRAF-type zinc finger domain-containing protein 1 (582 aa).

Ala-2 is subject to N-acetylalanine. Residues 27-103 (IHEIHCQRNI…DLELSILKLK (77 aa)) form a TRAF-type zinc finger. Ser-191 is modified (phosphoserine). Residues 217 to 236 (EQERQERNRGQQPPKEGGEE) are disordered. A phosphoserine mark is found at Ser-278, Ser-320, Ser-326, Ser-327, Ser-409, Ser-415, Ser-430, and Ser-470. The tract at residues 401-582 (TEGIPRLDSQ…AGDAEEEEEE (182 aa)) is disordered. Polar residues-rich tracts occupy residues 454–471 (PINN…STSG) and 486–495 (LSNSDSQDIQ).

In terms of assembly, interacts with MAVS, TICAM1, TRAF1, TRAF2, TRAF3. Interacts with TRAF6.

Negative feedback regulator that controls excessive innate immune responses. Regulates both Toll-like receptor 4 (TLR4) and DDX58/RIG1-like helicases (RLH) pathways. May inhibit the LTR pathway by direct interaction with TRAF6 and attenuation of NF-kappa-B activation. May negatively regulate the RLH pathway downstream from MAVS and upstream of NF-kappa-B and IRF3. The polypeptide is TRAF-type zinc finger domain-containing protein 1 (TRAFD1) (Homo sapiens (Human)).